The sequence spans 144 residues: HMG1/2-like protein (144 aa).

2 disordered regions span residues M1 to A42 and P85 to D144. Composition is skewed to basic and acidic residues over residues A8 to K35 and K89 to K99. Residues P36–N105 constitute a DNA-binding region (HMG box). Acidic residues predominate over residues N126–D144.

This sequence belongs to the HMGB family. In terms of tissue distribution, expressed at higher levels in dark-grown tissues, such as roots; and at lower levels in light-grown tissues, such as cotyledons and stems.

The protein localises to the nucleus. The polypeptide is HMG1/2-like protein (Ipomoea nil (Japanese morning glory)).